The primary structure comprises 293 residues: MNAIANLAATPGADLGECLADLAVDALIDEAELSPKPALVDRRGNGAHADLHLGLMQASALSLWPCFKEMADAAQRHGRIDARLRGVLGQLGRDGEAAMLRTTEGVNTHRGAIWALGLLVAAAALEPRRTQAGEVAARAGRIALLDDPAAAIGDSHGERVRRRYGVGGAREEARLCFPRAVRHGLPQLWRSREGGAGEQNARLDALLAIMSVLDDTCVLHRAGRVGLAAMQDGARAVLAAGGSASLAGRRRLCELDRRLLALNASPGGAADLLAACLFLDRLPAVSGGWAGSL.

It belongs to the CitG/MdcB family.

It carries out the reaction 3'-dephospho-CoA + ATP = 2'-(5''-triphospho-alpha-D-ribosyl)-3'-dephospho-CoA + adenine. Involved in the formation of 2-(5''-phosphoribosyl)-3'-dephosphocoenzyme-A, the prosthetic group of the acyl-carrier protein of the malonate decarboxylase. This is Probable 2-(5''-triphosphoribosyl)-3'-dephosphocoenzyme-A synthase from Pseudomonas aeruginosa (strain ATCC 15692 / DSM 22644 / CIP 104116 / JCM 14847 / LMG 12228 / 1C / PRS 101 / PAO1).